The primary structure comprises 454 residues: Nucleoprotein (454 aa).

The disordered stretch occupies residues 1-62 (MSFVPGQENA…ATTQPNSGSV (62 aa)). Positions 11–21 (GSRSSSGSRSG) are enriched in low complexity. Polar residues predominate over residues 49-61 (PKQTATTQPNSGS). The RNA-binding stretch occupies residues 56–197 (QPNSGSVVPH…GFYVEGSGRS (142 aa)). One can recognise a CoV N NTD domain in the interval 64 to 193 (PHYSWFSGIT…VLPQGFYVEG (130 aa)). Residues Arg109, Arg125, and Arg167 each contribute to the RNA site. Disordered regions lie at residues 159–230 (KTTA…STVK), 249–292 (AGQP…KRGP), and 382–428 (DGGA…RELT). At Ser170 the chain carries Phosphoserine; by host. Thr177 is modified (phosphothreonine; by host). The span at 193-212 (GSGRSAPASRSGSRSQSRGP) shows a compositional bias: low complexity. Ser194 bears the Phosphoserine; by host mark. The segment covering 215–227 (RARSSSNQRQPAS) has biased composition (polar residues). In terms of domain architecture, CoV N CTD spans 260-383 (AKEVRQKILN…ENLNAYQKDG (124 aa)). Positions 267 to 277 (ILNKPRQKRTP) are enriched in basic residues. The dimerization stretch occupies residues 267 to 383 (ILNKPRQKRT…ENLNAYQKDG (117 aa)). Residues Ser389 and Ser424 each carry the phosphoserine; by host modification. Phosphothreonine; by host is present on Thr428.

It belongs to the betacoronavirus nucleocapsid protein family. In terms of assembly, homooligomer. Both monomeric and oligomeric forms interact with RNA. Interacts with protein M. Interacts with NSP3; this interaction serves to tether the genome to the newly translated replicase-transcriptase complex at a very early stage of infection. Post-translationally, ADP-ribosylated. The ADP-ribosylation is retained in the virion during infection. In terms of processing, phosphorylated on serine and threonine residues.

The protein localises to the virion. It is found in the host endoplasmic reticulum-Golgi intermediate compartment. The protein resides in the host Golgi apparatus. Packages the positive strand viral genome RNA into a helical ribonucleocapsid (RNP) and plays a fundamental role during virion assembly through its interactions with the viral genome and membrane protein M. Plays an important role in enhancing the efficiency of subgenomic viral RNA transcription as well as viral replication. The protein is Nucleoprotein of Murine coronavirus (strain S) (MHV-S).